The following is a 344-amino-acid chain: Protein L-Myc-1-A (344 aa).

Disordered regions lie at residues 100–162 (RLTT…DDEI) and 209–261 (PPEP…EDIV). 3 stretches are compositionally biased toward polar residues: residues 102–112 (TTASPRATNPQ), 123–133 (PGVNSIEQNAN), and 236–255 (PALQQCSSPMPGSPLASGSS). In terms of domain architecture, bHLH spans 261 to 313 (VKKKNHNYLERKRRNDLRSRFLALREEVPSLTRSTKTPKVVVLSKATEFLKGL). The segment at 313–341 (LVIQEQQLTAEKFKLWSRHQQLLRRISHL) is leucine-zipper.

As to quaternary structure, efficient DNA binding requires dimerization with another bHLH protein. Binds DNA as a heterodimer with MAX. As to expression, high levels in oocytes, modest levels in kidney and low levels in spleen.

The protein resides in the nucleus. The chain is Protein L-Myc-1-A (mycl1-a) from Xenopus laevis (African clawed frog).